The chain runs to 385 residues: Probable tRNA sulfurtransferase (385 aa).

The THUMP domain maps to asparagine 57–lysine 161. ATP contacts are provided by residues methionine 181–leucine 182, tyrosine 206–tyrosine 207, arginine 263, glycine 285, and glutamine 294.

The protein belongs to the ThiI family.

Its subcellular location is the cytoplasm. It carries out the reaction [ThiI sulfur-carrier protein]-S-sulfanyl-L-cysteine + a uridine in tRNA + 2 reduced [2Fe-2S]-[ferredoxin] + ATP + H(+) = [ThiI sulfur-carrier protein]-L-cysteine + a 4-thiouridine in tRNA + 2 oxidized [2Fe-2S]-[ferredoxin] + AMP + diphosphate. The catalysed reaction is [ThiS sulfur-carrier protein]-C-terminal Gly-Gly-AMP + S-sulfanyl-L-cysteinyl-[cysteine desulfurase] + AH2 = [ThiS sulfur-carrier protein]-C-terminal-Gly-aminoethanethioate + L-cysteinyl-[cysteine desulfurase] + A + AMP + 2 H(+). The protein operates within cofactor biosynthesis; thiamine diphosphate biosynthesis. Catalyzes the ATP-dependent transfer of a sulfur to tRNA to produce 4-thiouridine in position 8 of tRNAs, which functions as a near-UV photosensor. Also catalyzes the transfer of sulfur to the sulfur carrier protein ThiS, forming ThiS-thiocarboxylate. This is a step in the synthesis of thiazole, in the thiamine biosynthesis pathway. The sulfur is donated as persulfide by IscS. This is Probable tRNA sulfurtransferase from Clostridium botulinum (strain Alaska E43 / Type E3).